A 182-amino-acid polypeptide reads, in one-letter code: MAATMMSKTIISSKQCSKPIAPPKVSINKGFVNTSAAIKNREMMVWQPFNNKMFETFSYLPPLTDEQISKQVDYILANAWTPCLEFAASDQAYAGNENCITMGPVASTYQDNRYWTMWKLPMFGCTDGSQVLTEIQACTKAFPDAYIRLVCFDANRQVQISGFLVHRPPSATDYRLPADRQV.

Residues 1 to 41 (MAATMMSKTIISSKQCSKPIAPPKVSINKGFVNTSAAIKNR) constitute a chloroplast transit peptide.

The protein belongs to the RuBisCO small chain family. Heterohexadecamer of 8 large and 8 small subunits.

It localises to the plastid. Its subcellular location is the chloroplast. In terms of biological role, ruBisCO catalyzes two reactions: the carboxylation of D-ribulose 1,5-bisphosphate, the primary event in carbon dioxide fixation, as well as the oxidative fragmentation of the pentose substrate. Both reactions occur simultaneously and in competition at the same active site. Although the small subunit is not catalytic it is essential for maximal activity. The sequence is that of Ribulose bisphosphate carboxylase small subunit, chloroplastic 6 from Acetabularia peniculus (Green alga).